Here is a 365-residue protein sequence, read N- to C-terminus: Histidinol-phosphate aminotransferase (365 aa).

K220 bears the N6-(pyridoxal phosphate)lysine mark.

This sequence belongs to the class-II pyridoxal-phosphate-dependent aminotransferase family. Histidinol-phosphate aminotransferase subfamily. As to quaternary structure, homodimer. Pyridoxal 5'-phosphate serves as cofactor.

The enzyme catalyses L-histidinol phosphate + 2-oxoglutarate = 3-(imidazol-4-yl)-2-oxopropyl phosphate + L-glutamate. It functions in the pathway amino-acid biosynthesis; L-histidine biosynthesis; L-histidine from 5-phospho-alpha-D-ribose 1-diphosphate: step 7/9. The chain is Histidinol-phosphate aminotransferase from Neisseria meningitidis serogroup B (strain ATCC BAA-335 / MC58).